We begin with the raw amino-acid sequence, 92 residues long: Small ribosomal subunit protein uS19 (92 aa).

Belongs to the universal ribosomal protein uS19 family.

Its function is as follows. Protein S19 forms a complex with S13 that binds strongly to the 16S ribosomal RNA. The chain is Small ribosomal subunit protein uS19 from Borrelia recurrentis (strain A1).